Reading from the N-terminus, the 262-residue chain is MTSTVIDIPDSVRAKIDVRNLNFYYGQFHALKNINMSIPDRKVTAFIGPSGCGKSTLLRTFNKMYGLYPEQRAEGEINMDGENLLTSRQDIALLRAKVGMVFQKPTPFPMSIYDNIAFGVRLFEKLSRSEMDDRVEWALSKAALWNEAKDKLHQSGYGLSGGQQQRLCIARGIAIRPEVLLLDEPCSALDPISTGRIEELIAELKDEYTVVIVTHNMQQAARCSDYTAYMYLGELIEFGETEKIFIKPHRKETEDYITGRFG.

The 242-residue stretch at 16-257 (IDVRNLNFYY…PHRKETEDYI (242 aa)) folds into the ABC transporter domain. Position 48 to 55 (48 to 55 (GPSGCGKS)) interacts with ATP.

It belongs to the ABC transporter superfamily. Phosphate importer (TC 3.A.1.7) family. As to quaternary structure, the complex is composed of two ATP-binding proteins (PstB), two transmembrane proteins (PstC and PstA) and a solute-binding protein (PstS).

It localises to the cell inner membrane. It carries out the reaction phosphate(out) + ATP + H2O = ADP + 2 phosphate(in) + H(+). Its function is as follows. Part of the ABC transporter complex PstSACB involved in phosphate import. Responsible for energy coupling to the transport system. The polypeptide is Phosphate import ATP-binding protein PstB (Cupriavidus pinatubonensis (strain JMP 134 / LMG 1197) (Cupriavidus necator (strain JMP 134))).